Reading from the N-terminus, the 236-residue chain is Small ribosomal subunit protein uS2c (236 aa).

Component of the chloroplast small ribosomal subunit (SSU). Mature 70S chloroplast ribosomes of higher plants consist of a small (30S) and a large (50S) subunit. The 30S small subunit contains 1 molecule of ribosomal RNA (16S rRNA) and 24 different proteins. The 50S large subunit contains 3 rRNA molecules (23S, 5S and 4.5S rRNA) and 33 different proteins.

It is found in the plastid. Its subcellular location is the chloroplast. Component of the chloroplast ribosome (chloro-ribosome), a dedicated translation machinery responsible for the synthesis of chloroplast genome-encoded proteins, including proteins of the transcription and translation machinery and components of the photosynthetic apparatus. In Spinacia oleracea (Spinach), this protein is Small ribosomal subunit protein uS2c (rps2).